The chain runs to 620 residues: UPF0313 protein BT_0254 (620 aa).

The region spanning 311 to 591 is the Radical SAM core domain; the sequence is AYDMIKFSVN…AQRQFFFWYK (281 aa). The [4Fe-4S] cluster site is built by Cys325, Cys329, and Cys332.

The protein belongs to the UPF0313 family. [4Fe-4S] cluster serves as cofactor.

The chain is UPF0313 protein BT_0254 from Bacteroides thetaiotaomicron (strain ATCC 29148 / DSM 2079 / JCM 5827 / CCUG 10774 / NCTC 10582 / VPI-5482 / E50).